A 411-amino-acid chain; its full sequence is MGLIVQKFGGTSVGSVERILNVANRVIEEKKNGNDVVVVVSAMGKTTDELVDLAKQISAHPPKREMDMLLTTGEQVTISLLAMALNEKGYEAISYTGWQAGITTEPVFGNARILNIETEKIQKQLNEGKIVVVAGFQGIDEHGEITTLGRGGSDTTAVALAAALKAEKCDIYTDVTGVFTTDPRYVKSARKLASISYDEMLELANLGAGVLHPRAVEFAKNYGITLEVRSSMEREEGTIIEEEVTMEQNLVVRGVAFEDEITRVTVFGLPNSLTSLSTIFTTLAQNRINVDIIIQSATDAETTNLSFSIKSDDLEETMAVLENNKNLLNYQGIESETGLAKVSIVGSGMISNPGVAAKMFEVLALNGIQVKMVSTSEIKVSTVVEESQMIKAVEALHQAFELSGSAVKSER.

Residue 7 to 10 (KFGG) coordinates ATP. 25 to 30 (RVIEEK) contacts substrate. Residue serine 41 coordinates ATP. Substrate is bound by residues 47–49 (TDE), glutamate 74, 125–126 (LN), 150–153 (RGGS), and serine 153. Residues 173–174 (TD) and 179–184 (FTTDPR) contribute to the ATP site. 2 consecutive ACT domains span residues 264 to 338 (VTVF…SETG) and 344 to 411 (IVGS…KSER). Substrate-binding positions include 289-291 (NVD), glutamine 295, 355-356 (VA), 369-370 (QV), and 376-377 (SE).

It belongs to the aspartokinase family. In terms of assembly, tetramer consisting of 2 isoforms Alpha (catalytic and regulation) and of a homodimer of 2 isoforms Beta (regulation).

It catalyses the reaction L-aspartate + ATP = 4-phospho-L-aspartate + ADP. The protein operates within amino-acid biosynthesis; L-lysine biosynthesis via DAP pathway; (S)-tetrahydrodipicolinate from L-aspartate: step 1/4. Its pathway is amino-acid biosynthesis; L-methionine biosynthesis via de novo pathway; L-homoserine from L-aspartate: step 1/3. It functions in the pathway amino-acid biosynthesis; L-threonine biosynthesis; L-threonine from L-aspartate: step 1/5. With respect to regulation, lysine-sensitive. Its function is as follows. Catalyzes the phosphorylation of the beta-carboxyl group of aspartic acid with ATP to yield 4-phospho-L-aspartate, which is involved in the branched biosynthetic pathway leading to the biosynthesis of amino acids threonine, isoleucine and methionine. The protein is Aspartokinase (lysC) of Bacillus sp. (strain MGA3).